A 741-amino-acid polypeptide reads, in one-letter code: MSLSCGDLANHNDRVVSLLNVCRKAPSFARTKALHALSITLCSVLLQPVYVCNNIISLYEKLGEVSLAGKVFDQMPERNKVSFNTIIKGYSKYGDVDKAWGVFSEMRYFGYLPNQSTVSGLLSCASLDVRAGTQLHGLSLKYGLFMADAFVGTCLLCLYGRLDLLEMAEQVFEDMPFKSLETWNHMMSLLGHRGFLKECMFFFRELVRMGASLTESSFLGVLKGVSCVKDLDISKQLHCSATKKGLDCEISVVNSLISAYGKCGNTHMAERMFQDAGSWDIVSWNAIICATAKSENPLKALKLFVSMPEHGFSPNQGTYVSVLGVSSLVQLLSCGRQIHGMLIKNGCETGIVLGNALIDFYAKCGNLEDSRLCFDYIRDKNIVCWNALLSGYANKDGPICLSLFLQMLQMGFRPTEYTFSTALKSCCVTELQQLHSVIVRMGYEDNDYVLSSLMRSYAKNQLMNDALLLLDWASGPTSVVPLNIVAGIYSRRGQYHESVKLISTLEQPDTVSWNIAIAACSRSDYHEEVIELFKHMLQSNIRPDKYTFVSILSLCSKLCDLTLGSSIHGLITKTDFSCADTFVCNVLIDMYGKCGSIRSVMKVFEETREKNLITWTALISCLGIHGYGQEALEKFKETLSLGFKPDRVSFISILTACRHGGMVKEGMGLFQKMKDYGVEPEMDHYRCAVDLLARNGYLKEAEHLIREMPFPADAPVWRTFLDGCNRFAEEQRNTLNVVSFQ.

PPR repeat units follow at residues 48–78 (PVYVCNNIISLYEKLGEVSLAGKVFDQMPER), 79–113 (NKVSFNTIIKGYSKYGDVDKAWGVFSEMRYFGYLP), 114–146 (NQSTVSGLLSCASLDVRAGTQLHGLSLKYGLFM), 148–178 (DAFVGTCLLCLYGRLDLLEMAEQVFEDMPFK), 179–213 (SLETWNHMMSLLGHRGFLKECMFFFRELVRMGASL), 214–248 (TESSFLGVLKGVSCVKDLDISKQLHCSATKKGLDC), 249–279 (EISVVNSLISAYGKCGNTHMAERMFQDAGSW), 280–314 (DIVSWNAIICATAKSENPLKALKLFVSMPEHGFSP), 315–349 (NQGTYVSVLGVSSLVQLLSCGRQIHGMLIKNGCET), 350–380 (GIVLGNALIDFYAKCGNLEDSRLCFDYIRDK), 381–414 (NIVCWNALLSGYANKDGPICLSLFLQMLQMGFRP), 415–445 (TEYTFSTALKSCCVTELQQLHSVIVRMGYED), 446–481 (NDYVLSSLMRSYAKNQLMNDALLLLDWASGPTSVVP), 483–508 (NIVAGIYSRRGQYHESVKLISTLEQP), 509–543 (DTVSWNIAIAACSRSDYHEEVIELFKHMLQSNIRP), 544–578 (DKYTFVSILSLCSKLCDLTLGSSIHGLITKTDFSC), 580–610 (DTFVCNVLIDMYGKCGSIRSVMKVFEETREK), 611–645 (NLITWTALISCLGIHGYGQEALEKFKETLSLGFKP), 646–680 (DRVSFISILTACRHGGMVKEGMGLFQKMKDYGVEP), and 681–715 (EMDHYRCAVDLLARNGYLKEAEHLIREMPFPADAP).

It belongs to the PPR family. P subfamily.

The protein is Pentatricopeptide repeat-containing protein At3g58590 of Arabidopsis thaliana (Mouse-ear cress).